A 751-amino-acid polypeptide reads, in one-letter code: Catalase-peroxidase 1 (751 aa).

Basic and acidic residues predominate over residues 1 to 11; the sequence is MTDKQHTRSVS. The tract at residues 1-31 is disordered; it reads MTDKQHTRSVSESENPAIPSPTPKVSRPRRN. The segment at residues 103 to 225 is a cross-link (tryptophyl-tyrosyl-methioninium (Trp-Tyr) (with M-251)); it reads WHAAGTYRIA…LANVQMGLIY (123 aa). Residue histidine 104 is the Proton acceptor of the active site. Residues 225–251 constitute a cross-link (tryptophyl-tyrosyl-methioninium (Tyr-Met) (with W-103)); that stretch reads YVNPEGPGGNPDPLAAARDIRETFARM. Residue histidine 266 coordinates heme b. The tract at residues 345–375 is disordered; the sequence is AGAKQWKPKNPEANDTVPDAHGASRRHSPTM.

It belongs to the peroxidase family. Peroxidase/catalase subfamily. In terms of assembly, homodimer or homotetramer. Heme b is required as a cofactor. In terms of processing, formation of the three residue Trp-Tyr-Met cross-link is important for the catalase, but not the peroxidase activity of the enzyme.

It carries out the reaction H2O2 + AH2 = A + 2 H2O. The enzyme catalyses 2 H2O2 = O2 + 2 H2O. Its function is as follows. Bifunctional enzyme with both catalase and broad-spectrum peroxidase activity. The polypeptide is Catalase-peroxidase 1 (Cupriavidus pinatubonensis (strain JMP 134 / LMG 1197) (Cupriavidus necator (strain JMP 134))).